Consider the following 854-residue polypeptide: DNA mismatch repair protein MutS (854 aa).

608–615 contacts ATP; that stretch reads GPNMAGKS.

It belongs to the DNA mismatch repair MutS family.

In terms of biological role, this protein is involved in the repair of mismatches in DNA. It is possible that it carries out the mismatch recognition step. This protein has a weak ATPase activity. This is DNA mismatch repair protein MutS from Leuconostoc mesenteroides subsp. mesenteroides (strain ATCC 8293 / DSM 20343 / BCRC 11652 / CCM 1803 / JCM 6124 / NCDO 523 / NBRC 100496 / NCIMB 8023 / NCTC 12954 / NRRL B-1118 / 37Y).